Here is a 175-residue protein sequence, read N- to C-terminus: uncharacterized protein (175 aa).

Disordered regions lie at residues 68-111 (NKSN…DDDQ) and 154-175 (PERA…KLTT). Residues 95–106 (EEQPMMPYQQPP) show a composition bias toward low complexity.

The protein belongs to the asfivirus H171R family.

The protein localises to the virion. This is an uncharacterized protein from African swine fever virus (isolate Pig/Kenya/KEN-50/1950) (ASFV).